The primary structure comprises 132 residues: Fatty acid-binding protein, intestinal (132 aa).

Ala2 is subject to N-acetylalanine. The hexadecanoate site is built by Trp83 and Arg107. The tetradecanoate site is built by Trp83 and Arg107.

The protein belongs to the calycin superfamily. Fatty-acid binding protein (FABP) family. As to expression, expressed in the small intestine and at much lower levels in the large intestine. Highest expression levels in the jejunum.

The protein localises to the cytoplasm. Functionally, FABPs are thought to play a role in the intracellular transport of long-chain fatty acids and their acyl-CoA esters. FABP2 is probably involved in triglyceride-rich lipoprotein synthesis. Binds saturated long-chain fatty acids with a high affinity, but binds with a lower affinity to unsaturated long-chain fatty acids. FABP2 may also help maintain energy homeostasis by functioning as a lipid sensor. The protein is Fatty acid-binding protein, intestinal (FABP2) of Homo sapiens (Human).